Consider the following 121-residue polypeptide: Large ribosomal subunit protein uL24 (121 aa).

The protein belongs to the universal ribosomal protein uL24 family. Part of the 50S ribosomal subunit.

In terms of biological role, one of two assembly initiator proteins, it binds directly to the 5'-end of the 23S rRNA, where it nucleates assembly of the 50S subunit. Located at the polypeptide exit tunnel on the outside of the subunit. This is Large ribosomal subunit protein uL24 from Pyrococcus horikoshii (strain ATCC 700860 / DSM 12428 / JCM 9974 / NBRC 100139 / OT-3).